Consider the following 320-residue polypeptide: Phospho-N-acetylmuramoyl-pentapeptide-transferase (320 aa).

Helical transmembrane passes span 5-25, 51-71, 75-95, 121-141, 143-163, 176-196, 198-218, 241-261, and 300-320; these read FWAF…VIKF, MGGA…SVAY, IGFV…IIGG, LCAV…ILNI, FIGV…WLVG, GLLT…ALGV, NHII…FLLF, IESI…IFVI, and IDAL…LYMS.

This sequence belongs to the glycosyltransferase 4 family. MraY subfamily. Requires Mg(2+) as cofactor.

The protein resides in the cell membrane. It carries out the reaction UDP-N-acetyl-alpha-D-muramoyl-L-alanyl-gamma-D-glutamyl-L-lysyl-D-alanyl-D-alanine + di-trans,octa-cis-undecaprenyl phosphate = Mur2Ac(oyl-L-Ala-gamma-D-Glu-L-Lys-D-Ala-D-Ala)-di-trans,octa-cis-undecaprenyl diphosphate + UMP. The protein operates within cell wall biogenesis; peptidoglycan biosynthesis. Catalyzes the initial step of the lipid cycle reactions in the biosynthesis of the cell wall peptidoglycan: transfers peptidoglycan precursor phospho-MurNAc-pentapeptide from UDP-MurNAc-pentapeptide onto the lipid carrier undecaprenyl phosphate, yielding undecaprenyl-pyrophosphoryl-MurNAc-pentapeptide, known as lipid I. In Leuconostoc mesenteroides subsp. mesenteroides (strain ATCC 8293 / DSM 20343 / BCRC 11652 / CCM 1803 / JCM 6124 / NCDO 523 / NBRC 100496 / NCIMB 8023 / NCTC 12954 / NRRL B-1118 / 37Y), this protein is Phospho-N-acetylmuramoyl-pentapeptide-transferase.